Consider the following 210-residue polypeptide: Small ribosomal subunit protein uS3 (210 aa).

Positions 17–86 (IDEFLEKELR…NPQIDVQEIK (70 aa)) constitute a KH type-2 domain.

Belongs to the universal ribosomal protein uS3 family. As to quaternary structure, part of the 30S ribosomal subunit.

Binds the lower part of the 30S subunit head. This chain is Small ribosomal subunit protein uS3, found in Pyrococcus horikoshii (strain ATCC 700860 / DSM 12428 / JCM 9974 / NBRC 100139 / OT-3).